We begin with the raw amino-acid sequence, 506 residues long: Ribose import ATP-binding protein RbsA (506 aa).

ABC transporter domains lie at 5 to 241 and 254 to 498; these read LALT…VGRR and RDAA…TSDV. 37–44 contributes to the ATP binding site; sequence GENGAGKS.

The protein belongs to the ABC transporter superfamily. Ribose importer (TC 3.A.1.2.1) family. As to quaternary structure, the complex is composed of an ATP-binding protein (RbsA), two transmembrane proteins (RbsC) and a solute-binding protein (RbsB).

It is found in the cell inner membrane. The catalysed reaction is D-ribose(out) + ATP + H2O = D-ribose(in) + ADP + phosphate + H(+). Its function is as follows. Part of the ABC transporter complex RbsABC involved in ribose import. Responsible for energy coupling to the transport system. This chain is Ribose import ATP-binding protein RbsA, found in Burkholderia mallei (strain ATCC 23344).